Consider the following 81-residue polypeptide: Small ribosomal subunit protein bS16 (81 aa).

The protein belongs to the bacterial ribosomal protein bS16 family.

The protein is Small ribosomal subunit protein bS16 of Lachnoclostridium phytofermentans (strain ATCC 700394 / DSM 18823 / ISDg) (Clostridium phytofermentans).